The primary structure comprises 25 residues: Superoxide dismutase [Mn], mitochondrial (25 aa).

Residue H9 coordinates Mn(2+).

It belongs to the iron/manganese superoxide dismutase family. As to quaternary structure, homotetramer. Requires Mn(2+) as cofactor.

It localises to the mitochondrion matrix. The enzyme catalyses 2 superoxide + 2 H(+) = H2O2 + O2. Its function is as follows. Destroys superoxide anion radicals which are normally produced within the cells and which are toxic to biological systems. In Alternaria alternata (Alternaria rot fungus), this protein is Superoxide dismutase [Mn], mitochondrial.